The sequence spans 615 residues: Forkhead box protein O (615 aa).

5 disordered regions span residues 39–77 (RARS…DSQQ), 182–205 (KSVR…RAKK), 217–269 (GLND…RLSP), 318–359 (FSAA…APGY), and 389–409 (NSVT…SDSL). A Phosphothreonine; by PKB/AKT1 modification is found at threonine 44. A compositionally biased stretch (polar residues) spans 63 to 77 (TKASNQQLAPGDSQQ). A Phosphoserine modification is found at serine 75. Residues 95–201 (WGNLSYADLI…ETSRYEKRRG (107 aa)) constitute a DNA-binding region (fork-head). Serine 190 carries the phosphoserine; by PKB/AKT1 modification. Composition is skewed to polar residues over residues 221-230 (ATPSPSSSVS) and 256-265 (RASSNASSCG). Phosphoserine; by PKB/AKT1 is present on serine 259. Phosphoserine occurs at positions 262, 263, and 268. The span at 326–335 (SQPPPPPYQP) shows a compositional bias: pro residues. Over residues 336 to 351 (PQHQQAQQQQQQSPYA) the composition is skewed to low complexity.

Interacts with melt.

The protein localises to the cytoplasm. The protein resides in the nucleus. Transcription factor involved in the regulation of the insulin signaling pathway. Consistently activates both the downstream target Thor\d4EBP and the feedback control target InR. Involved in negative regulation of the cell cycle, modulating cell growth and proliferation. In response to cellular stresses, such as nutrient deprivation or increased levels of reactive oxygen species, foxo is activated and inhibits growth through the action of target genes such as Thor. Foxo activated in the adult fat body can regulate lifespan in adults; an insulin peptide itself may function as one secondary messenger of insulin-regulated aging. Also regulates Lip4, homolog of human acid lipases, thereby acting as a key modulator of lipid metabolism by insulin signaling and integrates insulin responses to glucose and lipid homeostasis. This Drosophila erecta (Fruit fly) protein is Forkhead box protein O.